Here is an 87-residue protein sequence, read N- to C-terminus: Small ribosomal subunit protein bS20 (87 aa).

This sequence belongs to the bacterial ribosomal protein bS20 family.

In terms of biological role, binds directly to 16S ribosomal RNA. The protein is Small ribosomal subunit protein bS20 of Clostridium beijerinckii (strain ATCC 51743 / NCIMB 8052) (Clostridium acetobutylicum).